The chain runs to 264 residues: MRIVLGVEYAGSAFEGFQSQAHGRTVQDHLEAAIGHIAAHPVRLHCAGRTDAGVHATAQVVHFDTESVRPNSGWVRGVNSRLSSPVVVRWATEAGDGFHARFCAVSRRYRYILHNSPVRPALLAGRVGWFHPPLDEIAMAEAARCLEGWHDFSAFRAAGCQAKSPVKLMHEVRVQRAGDYVVFDFWANAFLHHMVRNLVGALVYVGKGRHSAAWLAEVLAARDRSLAALTFSADGLYLCGVEYAPHWSLPGEGRIIVVPRIPFV.

The active-site Nucleophile is the Asp-51. Tyr-109 is a substrate binding site.

It belongs to the tRNA pseudouridine synthase TruA family. In terms of assembly, homodimer.

The enzyme catalyses uridine(38/39/40) in tRNA = pseudouridine(38/39/40) in tRNA. Its function is as follows. Formation of pseudouridine at positions 38, 39 and 40 in the anticodon stem and loop of transfer RNAs. This is tRNA pseudouridine synthase A from Aromatoleum aromaticum (strain DSM 19018 / LMG 30748 / EbN1) (Azoarcus sp. (strain EbN1)).